A 109-amino-acid polypeptide reads, in one-letter code: UPF0122 protein CLH_1195 (109 aa).

Belongs to the UPF0122 family.

Functionally, might take part in the signal recognition particle (SRP) pathway. This is inferred from the conservation of its genetic proximity to ftsY/ffh. May be a regulatory protein. The protein is UPF0122 protein CLH_1195 of Clostridium botulinum (strain Alaska E43 / Type E3).